A 122-amino-acid polypeptide reads, in one-letter code: MSVPTMAWMMLLLGLLAYGSGVDSQTVVTQEPSFSVSPGGTVTLTCGLSSGSVSTSYYPSWYQQTPGQAPRTLIYSTNTRSSGVPDRFSGSILGNKAALTITGAQADDESDYYCVLYMGSGI.

Positions 1 to 24 are cleaved as a signal peptide; it reads MSVPTMAWMMLLLGLLAYGSGVDS. A framework-1 region spans residues 25–49; the sequence is QTVVTQEPSFSVSPGGTVTLTCGLS. The Ig-like domain maps to 25 to 122; it reads QTVVTQEPSF…YCVLYMGSGI (98 aa). Cys-46 and Cys-114 form a disulfide bridge. Residues 50 to 58 form a complementarity-determining-1 region; that stretch reads SGSVSTSYY. The segment at 59-75 is framework-2; the sequence is PSWYQQTPGQAPRTLIY. The tract at residues 76–78 is complementarity-determining-2; the sequence is STN. Residues 79-114 form a framework-3 region; sequence TRSSGVPDRFSGSILGNKAALTITGAQADDESDYYC. A complementarity-determining-3 region spans residues 115–122; it reads VLYMGSGI.

As to quaternary structure, immunoglobulins are composed of two identical heavy chains and two identical light chains; disulfide-linked.

The protein resides in the secreted. It is found in the cell membrane. V region of the variable domain of immunoglobulin light chains that participates in the antigen recognition. Immunoglobulins, also known as antibodies, are membrane-bound or secreted glycoproteins produced by B lymphocytes. In the recognition phase of humoral immunity, the membrane-bound immunoglobulins serve as receptors which, upon binding of a specific antigen, trigger the clonal expansion and differentiation of B lymphocytes into immunoglobulins-secreting plasma cells. Secreted immunoglobulins mediate the effector phase of humoral immunity, which results in the elimination of bound antigens. The antigen binding site is formed by the variable domain of one heavy chain, together with that of its associated light chain. Thus, each immunoglobulin has two antigen binding sites with remarkable affinity for a particular antigen. The variable domains are assembled by a process called V-(D)-J rearrangement and can then be subjected to somatic hypermutations which, after exposure to antigen and selection, allow affinity maturation for a particular antigen. The polypeptide is Immunoglobulin lambda variable 8-61 (Homo sapiens (Human)).